The following is a 209-amino-acid chain: Pyroglutamyl-peptidase 1 (209 aa).

Catalysis depends on residues E85, C149, and H168.

Belongs to the peptidase C15 family. As to quaternary structure, monomer.

Its subcellular location is the cytoplasm. It catalyses the reaction Release of an N-terminal pyroglutamyl group from a polypeptide, the second amino acid generally not being Pro.. Its activity is regulated as follows. Inhibited by transition metal ions including Ni(2+), Zn(2+), and Cu(2+) and by sulfhydryl-blocking agents. Functionally, removes 5-oxoproline from various penultimate amino acid residues except L-proline. This Homo sapiens (Human) protein is Pyroglutamyl-peptidase 1 (PGPEP1).